The sequence spans 460 residues: DNA repair protein RAD57 (460 aa).

125 to 132 is an ATP binding site; it reads GESSTGKS.

This sequence belongs to the RecA family.

The protein localises to the nucleus. Functionally, participates in the repair of X-ray-induced damage to DNA and in meiosis. It may act in part by stabilizing a repair complex of other RAD genes. The polypeptide is DNA repair protein RAD57 (RAD57) (Saccharomyces cerevisiae (strain ATCC 204508 / S288c) (Baker's yeast)).